Reading from the N-terminus, the 116-residue chain is Secreted RxLR effector protein 9 (116 aa).

An N-terminal signal peptide occupies residues 1-17 (MRLIYIFMVSIVTTLHA). The short motif at 49–64 (RILRGTDGNVNREQER) is the RxLR-dEER element.

It belongs to the RxLR effector family.

It is found in the secreted. The protein localises to the host cytoplasm. It localises to the host nucleus. Effector that acts as a broad suppressor of cell death to interrupt plant immunity. Inhibits cell death induced by cell death-inducing proteins, including the PAMP elicitor INF1 from P.infestans. The sequence is that of Secreted RxLR effector protein 9 from Plasmopara viticola (Downy mildew of grapevine).